A 102-amino-acid polypeptide reads, in one-letter code: Large ribosomal subunit protein bL21 (102 aa).

The protein belongs to the bacterial ribosomal protein bL21 family. Part of the 50S ribosomal subunit. Contacts protein L20.

Its function is as follows. This protein binds to 23S rRNA in the presence of protein L20. The protein is Large ribosomal subunit protein bL21 of Bacillus cytotoxicus (strain DSM 22905 / CIP 110041 / 391-98 / NVH 391-98).